A 270-amino-acid polypeptide reads, in one-letter code: Phosphatidylglycerol--prolipoprotein diacylglyceryl transferase (270 aa).

Helical transmembrane passes span 17 to 37 (LAIH…MFLG), 63 to 83 (ILFL…CLFY), and 95 to 115 (IFYI…VIAS). R146 serves as a coordination point for a 1,2-diacyl-sn-glycero-3-phospho-(1'-sn-glycerol). A run of 3 helical transmembrane segments spans residues 182-202 (SQVY…WLYA), 209-229 (GEVA…AEYF), and 243-263 (MSMG…LWVW).

Belongs to the Lgt family.

The protein localises to the cell inner membrane. The enzyme catalyses L-cysteinyl-[prolipoprotein] + a 1,2-diacyl-sn-glycero-3-phospho-(1'-sn-glycerol) = an S-1,2-diacyl-sn-glyceryl-L-cysteinyl-[prolipoprotein] + sn-glycerol 1-phosphate + H(+). Its pathway is protein modification; lipoprotein biosynthesis (diacylglyceryl transfer). Its function is as follows. Catalyzes the transfer of the diacylglyceryl group from phosphatidylglycerol to the sulfhydryl group of the N-terminal cysteine of a prolipoprotein, the first step in the formation of mature lipoproteins. In Paracidovorax citrulli (strain AAC00-1) (Acidovorax citrulli), this protein is Phosphatidylglycerol--prolipoprotein diacylglyceryl transferase.